Consider the following 413-residue polypeptide: Clamp protein VP6 (413 aa).

Belongs to the reoviridae clamp protein family. In terms of assembly, interacts with capsid proteins VP3, VP4 and VP7.

The protein resides in the virion. Its function is as follows. Located at the interface of the incomplete T=13 outer capsid and the pseudo T=2 inner capsid, 120 VP6 subunits clamp and stabilize the inner capsid shell. This Ctenopharyngodon idella (Grass carp) protein is Clamp protein VP6 (S8).